The chain runs to 92 residues: Protein E7 (92 aa).

The segment at 1–43 (MHGTRPSLADITLILEEIPEIIDLHCDEQFDSSEEENNHQLTE) is E7 terminal domain. The short motif at 24–28 (LHCDE) is the LXCXE motif; interaction with host RB1 and TMEM173/STING element. A zinc finger lies at 55–91 (CCKCGRAVRLVVECGPEDIRDLEQLFLKTLNLVCPHC). The Nuclear export signal motif lies at 73 to 81 (IRDLEQLFL).

The protein belongs to the papillomaviridae E7 protein family. Homodimer. Homooligomer. Interacts with host RB1; this interaction induces dissociation of RB1-E2F1 complex thereby disrupting RB1 activity. Interacts with host EP300; this interaction represses EP300 transcriptional activity. Interacts with protein E2; this interaction inhibits E7 oncogenic activity. Interacts with host TMEM173/STING; this interaction impairs the ability of TMEM173/STING to sense cytosolic DNA and promote the production of type I interferon (IFN-alpha and IFN-beta). Highly phosphorylated.

It localises to the host cytoplasm. The protein resides in the host nucleus. Functionally, plays a role in viral genome replication by driving entry of quiescent cells into the cell cycle. Stimulation of progression from G1 to S phase allows the virus to efficiently use the cellular DNA replicating machinery to achieve viral genome replication. E7 protein has both transforming and trans-activating activities. Induces the disassembly of the E2F1 transcription factor from RB1, with subsequent transcriptional activation of E2F1-regulated S-phase genes. Interferes with host histone deacetylation mediated by HDAC1 and HDAC2, leading to transcription activation. Also plays a role in the inhibition of both antiviral and antiproliferative functions of host interferon alpha. Interaction with host TMEM173/STING impairs the ability of TMEM173/STING to sense cytosolic DNA and promote the production of type I interferon (IFN-alpha and IFN-beta). This chain is Protein E7, found in Homo sapiens (Human).